A 601-amino-acid polypeptide reads, in one-letter code: AT-rich interactive domain-containing protein 3A (601 aa).

A disordered region spans residues 1 to 224; sequence MKLQAVMETL…HMASQMPPPD (224 aa). The span at 60–89 shows a compositional bias: low complexity; sequence MAALAAMRAAAAGLGHPSSPGGSEDGPPIS. Phosphoserine occurs at positions 78, 82, and 89. T99 carries the post-translational modification Phosphothreonine. The residue at position 102 (S102) is a Phosphoserine. Basic and acidic residues predominate over residues 114 to 123; the sequence is GHAEGDRHLM. The residue at position 127 (S127) is a Phosphoserine. Residues 128–165 form an acidic region; the sequence is DDDDTKSKWEEQELEELGEEEEEEEEEDDFEEEEEEEE. The span at 139 to 166 shows a compositional bias: acidic residues; that stretch reads QELEELGEEEEEEEEEDDFEEEEEEEEG. In terms of domain architecture, ARID spans 243–335; it reads DPKRKEFLDD…YLYPYECERR (93 aa). Phosphoserine is present on residues S358 and S367. Residues K403, K404, K457, and K467 each participate in a glycyl lysine isopeptide (Lys-Gly) (interchain with G-Cter in SUMO2) cross-link. An REKLES domain is found at 449–546; that stretch reads AALEQLREKL…GVLFAQPPPP (98 aa). An important for nuclear localization region spans residues 450 to 493; sequence ALEQLREKLESTEPPEKKMALVADEQQRLMQRAVQQSFLAMTAQ. A homodimerization region spans residues 495-518; the sequence is PMNIRINSQASESRQDSAVSLTSA. The segment at 542–562 is important for cytoplasmic localization; sequence QPPPPTAPSAPGKGGVSSIGT. The segment at 545–601 is disordered; sequence PPTAPSAPGKGGVSSIGTNTTTGSRTGASGSTVSGGQVGLPGVSTPTMSSTSNNSLP. Composition is skewed to low complexity over residues 559–579 and 588–601; these read SIGT…TVSG and STPT…NSLP.

Homodimer. Heterodimer with ARID3B. Interacts with E2F1. Interacts with GTF2I and BTK. In terms of tissue distribution, B-cell specific in the adult. Expressed in B-cell progenitors, down-regulated in the immature B-cell stage, and is up-regulated again at later stages of B-lymphocyte differentiation.

The protein localises to the nucleus. It is found in the cytoplasm. Its function is as follows. Transcription factor involved in B-cell differentiation. Binds a VH promoter proximal site necessary for induced mu-heavy-chain transcription. Binds the minor groove of a restricted ATC sequence that is sufficient for nuclear matrix association. This sequence motif is present in matrix-associating regions (MARS) proximal to the promoter and flanking E mu. Activates E mu-driven transcription by binding these sites. May be involved in the control of cell cycle progression by the RB1/E2F1 pathway. The sequence is that of AT-rich interactive domain-containing protein 3A (Arid3a) from Mus musculus (Mouse).